Consider the following 310-residue polypeptide: tRNA dimethylallyltransferase (310 aa).

Position 19 to 26 (19 to 26) interacts with ATP; it reads GPTGTGKS. Residue 21–26 coordinates substrate; it reads TGTGKS.

Belongs to the IPP transferase family. In terms of assembly, monomer. The cofactor is Mg(2+).

It carries out the reaction adenosine(37) in tRNA + dimethylallyl diphosphate = N(6)-dimethylallyladenosine(37) in tRNA + diphosphate. Its function is as follows. Catalyzes the transfer of a dimethylallyl group onto the adenine at position 37 in tRNAs that read codons beginning with uridine, leading to the formation of N6-(dimethylallyl)adenosine (i(6)A). The sequence is that of tRNA dimethylallyltransferase from Saccharopolyspora erythraea (strain ATCC 11635 / DSM 40517 / JCM 4748 / NBRC 13426 / NCIMB 8594 / NRRL 2338).